Reading from the N-terminus, the 188-residue chain is Ubiquitin-like protein 4B (188 aa).

Residues 1-76 enclose the Ubiquitin-like domain; the sequence is MFLTVKLLLG…INVIMRPPED (76 aa). The segment at 146–188 is disordered; the sequence is EEKEAPAVASELEQNNGGGGGGGGTGGEGGGKKEEEEGEEADQ. The span at 161-174 shows a compositional bias: gly residues; the sequence is NGGGGGGGGTGGEG.

As to expression, expressed specifically in post-meiotic male germ cells of the testis. Abundantly expressed in stage 14-16 spermatids.

It is found in the cytoplasm. The sequence is that of Ubiquitin-like protein 4B (Ubl4b) from Mus musculus (Mouse).